A 661-amino-acid chain; its full sequence is Arginine--tRNA ligase, cytoplasmic (661 aa).

Position 1 is an N-acetylmethionine (Met-1). Residues 1-73 (MDGLVAQCSA…AEKRRRPTKN (73 aa)) form a could be involved in the assembly of the multisynthetase complex region. L-arginine is bound by residues 201-203 (SPN), His-212, Tyr-385, Asp-389, and Gln-413. The 'HIGH' region motif lies at 202–213 (PNIAKEMHVGHL). The interval 530–544 (NTAAYLLYAFTRIRS) is interaction with tRNA.

Belongs to the class-I aminoacyl-tRNA synthetase family. In terms of assembly, interacts (via N-terminus) with AIMP1 (via N-terminus); this stimulates its catalytic activity. Interacts (via N-terminus) with LARS2 (via C-terminus). Monomer. Part of a multisubunit complex that groups tRNA ligases for Arg (RARS1), Asp (DARS1), Gln (QARS1), Ile (IARS1), Leu (LARS1), Lys (KARS1), Met (MARS1) the bifunctional ligase for Glu and Pro (EPRS1) and the auxiliary subunits AIMP1/p43, AIMP2/p38 and EEF1E1/p18. Interacts with QARS1. Part of a complex composed of RARS1, QARS1 and AIMP1.

It localises to the cytoplasm. The protein localises to the cytosol. It catalyses the reaction tRNA(Arg) + L-arginine + ATP = L-arginyl-tRNA(Arg) + AMP + diphosphate. In terms of biological role, forms part of a macromolecular complex that catalyzes the attachment of specific amino acids to cognate tRNAs during protein synthesis. Modulates the secretion of AIMP1 and may be involved in generation of the inflammatory cytokine EMAP2 from AIMP1. This is Arginine--tRNA ligase, cytoplasmic (RARS1) from Cricetulus griseus (Chinese hamster).